A 216-amino-acid polypeptide reads, in one-letter code: Somatotropin (216 aa).

Positions 1–25 (MAPGSWFSPLLIAVVTLGLPQEAAA) are cleaved as a signal peptide. Histidine 45 is a Zn(2+) binding site. Cysteine 78 and cysteine 189 are oxidised to a cystine. Glutamate 198 is a binding site for Zn(2+). Cysteine 206 and cysteine 214 are oxidised to a cystine.

Belongs to the somatotropin/prolactin family.

The protein localises to the secreted. In terms of biological role, growth hormone plays an important role in growth control. In Gallus gallus (Chicken), this protein is Somatotropin (GH).